Consider the following 444-residue polypeptide: CCA-adding enzyme (444 aa).

The ATP site is built by serine 57 and arginine 60. Residues serine 57 and arginine 60 each contribute to the CTP site. Aspartate 69, aspartate 71, and aspartate 124 together coordinate Mg(2+). Residues histidine 147, lysine 168, and tyrosine 177 each coordinate ATP. Positions 147, 168, and 177 each coordinate CTP.

It belongs to the tRNA nucleotidyltransferase/poly(A) polymerase family. Archaeal CCA-adding enzyme subfamily. In terms of assembly, homodimer. Requires Mg(2+) as cofactor.

The catalysed reaction is a tRNA precursor + 2 CTP + ATP = a tRNA with a 3' CCA end + 3 diphosphate. It carries out the reaction a tRNA with a 3' CCA end + 2 CTP + ATP = a tRNA with a 3' CCACCA end + 3 diphosphate. In terms of biological role, catalyzes the addition and repair of the essential 3'-terminal CCA sequence in tRNAs without using a nucleic acid template. Adds these three nucleotides in the order of C, C, and A to the tRNA nucleotide-73, using CTP and ATP as substrates and producing inorganic pyrophosphate. tRNA 3'-terminal CCA addition is required both for tRNA processing and repair. Also involved in tRNA surveillance by mediating tandem CCA addition to generate a CCACCA at the 3' terminus of unstable tRNAs. While stable tRNAs receive only 3'-terminal CCA, unstable tRNAs are marked with CCACCA and rapidly degraded. This is CCA-adding enzyme from Methanococcus maripaludis (strain DSM 14266 / JCM 13030 / NBRC 101832 / S2 / LL).